The sequence spans 285 residues: Retron Ec67 DNA adenine methylase (285 aa).

S-adenosyl-L-methionine-binding residues include Trp7, Lys11, Asp51, and Asp179.

Belongs to the N(4)/N(6)-methyltransferase family.

The enzyme catalyses a 2'-deoxyadenosine in DNA + S-adenosyl-L-methionine = an N(6)-methyl-2'-deoxyadenosine in DNA + S-adenosyl-L-homocysteine + H(+). In terms of biological role, an alpha subtype methylase that recognizes the double-stranded sequence 5'-GATC-3' and methylates A-2 on both strands. May play a regulatory role in the functions of the retron. This Escherichia coli protein is Retron Ec67 DNA adenine methylase.